The following is a 91-amino-acid chain: Parbolysin P6 (91 aa).

3 disulfide bridges follow: Cys-16-Cys-37, Cys-22-Cys-33, and Cys-47-Cys-60.

It belongs to the worm cytolysin family. In terms of tissue distribution, localized within the skin and proboscis and are most readily isolated from body mucus secretions.

It localises to the secreted. In terms of biological role, cytolysin that shows hemolytic activity (on bovine erythrocytes, HC(50)=5.75 mg/ml). This hemolytic activity is completely inhibited by small unilamelar vesicles composed of PC/PG, PC/PI and PC/PS in 1:1 molar ratios (with at least 100 mg/ml concentration). In Parborlasia corrugatus (Antarctic nemertean worm), this protein is Parbolysin P6.